The primary structure comprises 431 residues: Mitochondrial inner membrane protein OXA1-like (431 aa).

A mitochondrion-targeting transit peptide spans 1 to 22; that stretch reads MATCLRGITKRVNLLQRRVYPS. The next 5 helical transmembrane spans lie at 119-139, 155-175, 227-247, 269-289, and 312-332; these read VVPAINEVAIAAADSAFPVAA, WWASIALTTVLIRGVTIPILL, FTPLKGLIIQGPIFISFFFAI, TTTDTTYILPLLTAVTFLIMV, and IIAFLSIPVLIGIEKALFCYW. The disordered stretch occupies residues 362–414; it reads NSSTRQPSPSSPLPFSFAEPKDQSVVAQEKPPMSSESSSSVPDRRISRSSVLN. The segment covering 392–402 has biased composition (low complexity); sequence PPMSSESSSSV.

It belongs to the OXA1/ALB3/YidC (TC 2.A.9.2) family.

It is found in the mitochondrion inner membrane. Its function is as follows. Probably required for the insertion of integral membrane proteins into the mitochondrial inner membrane. May participate in the activity and assembly of cytochrome oxidase. The polypeptide is Mitochondrial inner membrane protein OXA1-like (OXA1L) (Arabidopsis thaliana (Mouse-ear cress)).